The following is a 97-amino-acid chain: Aspartyl/glutamyl-tRNA(Asn/Gln) amidotransferase subunit C (97 aa).

The segment covering 74 to 84 (TPEEATAAAPA) has biased composition (low complexity). Residues 74-97 (TPEEATAAAPAREGTAFKVPRIIE) are disordered.

Belongs to the GatC family. In terms of assembly, heterotrimer of A, B and C subunits.

It carries out the reaction L-glutamyl-tRNA(Gln) + L-glutamine + ATP + H2O = L-glutaminyl-tRNA(Gln) + L-glutamate + ADP + phosphate + H(+). It catalyses the reaction L-aspartyl-tRNA(Asn) + L-glutamine + ATP + H2O = L-asparaginyl-tRNA(Asn) + L-glutamate + ADP + phosphate + 2 H(+). In terms of biological role, allows the formation of correctly charged Asn-tRNA(Asn) or Gln-tRNA(Gln) through the transamidation of misacylated Asp-tRNA(Asn) or Glu-tRNA(Gln) in organisms which lack either or both of asparaginyl-tRNA or glutaminyl-tRNA synthetases. The reaction takes place in the presence of glutamine and ATP through an activated phospho-Asp-tRNA(Asn) or phospho-Glu-tRNA(Gln). This is Aspartyl/glutamyl-tRNA(Asn/Gln) amidotransferase subunit C from Anaeromyxobacter dehalogenans (strain 2CP-1 / ATCC BAA-258).